Consider the following 170-residue polypeptide: MKSKIVGVIAIVLVFALDQVSKAYAIDWYSQSGATEIFKFCSLVEVWNRGISFGMFGALESSNLIFTYVSLGVILMLFVLFVQSKCNKSTICMGVVIGGALGNLADRLRFGAVYDFISLHAGEFHWPAFNFADVCVTCGVICFLCLEVMYHAKACVDTSGDPDALSVKKY.

3 consecutive transmembrane segments (helical) span residues 5–25 (IVGV…KAYA), 62–82 (SNLI…VLFV), and 89–111 (STIC…LRFG). Active-site residues include D115 and D133. A helical membrane pass occupies residues 126-146 (WPAFNFADVCVTCGVICFLCL).

It belongs to the peptidase A8 family.

It is found in the cell inner membrane. It catalyses the reaction Release of signal peptides from bacterial membrane prolipoproteins. Hydrolyzes -Xaa-Yaa-Zaa-|-(S,diacylglyceryl)Cys-, in which Xaa is hydrophobic (preferably Leu), and Yaa (Ala or Ser) and Zaa (Gly or Ala) have small, neutral side chains.. It participates in protein modification; lipoprotein biosynthesis (signal peptide cleavage). In terms of biological role, this protein specifically catalyzes the removal of signal peptides from prolipoproteins. The polypeptide is Lipoprotein signal peptidase (Anaplasma marginale (strain Florida)).